Here is a 641-residue protein sequence, read N- to C-terminus: E3 ubiquitin-protein ligase TRIM47 (641 aa).

The RING-type zinc finger occupies 9-58 (CPICLEPLREPVTLPCGHNFCLACLGALWPHRSAGGTGGSGGPARCPLCQ). Phosphothreonine is present on Thr72. Residues 81–123 (QGSVPGPMSAPASGSTRGATPEPSAPSAPPPAPEPSAPCAPEQ) are disordered. A compositionally biased stretch (pro residues) spans 103 to 118 (PSAPSAPPPAPEPSAP). Residues 181 to 221 (LEESLCPRHLRPLERYCRVERVCLCEACATQDHRGHELVPL) form a B box-type zinc finger. Residues Cys186, His189, Cys208, and His213 each contribute to the Zn(2+) site. The stretch at 305 to 325 (QGDLRRQEEQRSRLSKARHNL) forms a coiled coil. Ser393 is subject to Phosphoserine. The interval 396-416 (DGLQKLGSEDVESQDPDSTSL) is disordered. The B30.2/SPRY domain maps to 413-634 (STSLLESEAP…LQIGPLKKSC (222 aa)). The residue at position 464 (Ser464) is a Phosphoserine. Position 585 is an omega-N-methylarginine (Arg585). Ser591 carries the phosphoserine modification.

This sequence belongs to the TRIM/RBCC family. Expressed in hepatocytes, expression is increased in fatty livers.

The protein localises to the cytoplasm. It is found in the nucleus. The catalysed reaction is S-ubiquitinyl-[E2 ubiquitin-conjugating enzyme]-L-cysteine + [acceptor protein]-L-lysine = [E2 ubiquitin-conjugating enzyme]-L-cysteine + N(6)-ubiquitinyl-[acceptor protein]-L-lysine.. It functions in the pathway protein modification; protein ubiquitination. E3 ubiquitin-protein ligase that mediates the ubiquitination and proteasomal degradation of CYLD. The chain is E3 ubiquitin-protein ligase TRIM47 from Mus musculus (Mouse).